Consider the following 102-residue polypeptide: NADH-quinone oxidoreductase subunit K (102 aa).

A run of 3 helical transmembrane segments spans residues 6 to 26 (LEHGLIVATILFALGFYGVMV), 30 to 50 (LLFMLMSLEIMMNAAALAFVL), and 62 to 82 (IMFILILTLAAAEACIGLAIV).

This sequence belongs to the complex I subunit 4L family. In terms of assembly, NDH-1 is composed of 14 different subunits. Subunits NuoA, H, J, K, L, M, N constitute the membrane sector of the complex.

The protein resides in the cell inner membrane. It catalyses the reaction a quinone + NADH + 5 H(+)(in) = a quinol + NAD(+) + 4 H(+)(out). Functionally, NDH-1 shuttles electrons from NADH, via FMN and iron-sulfur (Fe-S) centers, to quinones in the respiratory chain. The immediate electron acceptor for the enzyme in this species is believed to be ubiquinone. Couples the redox reaction to proton translocation (for every two electrons transferred, four hydrogen ions are translocated across the cytoplasmic membrane), and thus conserves the redox energy in a proton gradient. The protein is NADH-quinone oxidoreductase subunit K of Acinetobacter baylyi (strain ATCC 33305 / BD413 / ADP1).